The following is a 249-amino-acid chain: ATP-dependent Clp protease proteolytic subunit (249 aa).

Residue serine 107 is the Nucleophile of the active site. The active site involves histidine 132. A disordered region spans residues 212–249 (ESASQDNSLDPDAPDESASQDNSLDPDAPDETRPPKLR).

This sequence belongs to the peptidase S14 family. Component of the chloroplastic Clp protease core complex.

The protein localises to the plastid. The protein resides in the chloroplast stroma. It catalyses the reaction Hydrolysis of proteins to small peptides in the presence of ATP and magnesium. alpha-casein is the usual test substrate. In the absence of ATP, only oligopeptides shorter than five residues are hydrolyzed (such as succinyl-Leu-Tyr-|-NHMec, and Leu-Tyr-Leu-|-Tyr-Trp, in which cleavage of the -Tyr-|-Leu- and -Tyr-|-Trp bonds also occurs).. In terms of biological role, cleaves peptides in various proteins in a process that requires ATP hydrolysis. Has a chymotrypsin-like activity. Plays a major role in the degradation of misfolded proteins. This is ATP-dependent Clp protease proteolytic subunit from Oenothera elata subsp. hookeri (Hooker's evening primrose).